Consider the following 554-residue polypeptide: Movement protein Hsp70h (554 aa).

The protein belongs to the heat shock protein 70 family.

The protein localises to the virion. Transports viral genome to neighboring plant cells directly through plasmosdesmata, without any budding. The movement protein allows efficient cell to cell propagation, by bypassing the host cell wall barrier. Two movement proteins, p6, Hsp70h and three structural proteins, CP, CPm, and P64 are essential for cell-cell movement. Also plays a role in virion formation. Together with CPm and p64, encapsidates the 5'-terminal portion of the viral genome. This is Movement protein Hsp70h from Lettuce infectious yellows virus (isolate United States/92) (LIYV).